The sequence spans 514 residues: Na(+)/H(+) antiporter NhaB (514 aa).

The next 12 helical transmembrane spans lie at 23-43 (LALLVFLIVNPFIFLANPFVA), 63-83 (PLLPGGLLAIEAVIIGMTSAA), 97-117 (LLLMFMVAGIYFMKQLLLFIF), 120-140 (LLLSIRSKMVLSLAFCVAAAF), 144-164 (FLDALTVVAVVISVAVGFYGI), 202-222 (LMMHAGVGTALGGVMTMVGEP), 238-258 (FFLRMSPVTVPVLVCGLLTCM), 303-323 (AVIGVWLVTALALHLAEVGLI), 357-377 (LTVFFSIVAVIIDQHLFAPII), 391-411 (LFYLFNGLLSSISDNVFVGTI), 447-467 (ATPNGQAAFLFLLTSALAPLI), and 475-495 (VWMALPYTIVLTLIGLLCVEF).

Belongs to the NhaB Na(+)/H(+) (TC 2.A.34) antiporter family.

It localises to the cell inner membrane. The enzyme catalyses 2 Na(+)(in) + 3 H(+)(out) = 2 Na(+)(out) + 3 H(+)(in). Its function is as follows. Na(+)/H(+) antiporter that extrudes sodium in exchange for external protons. This is Na(+)/H(+) antiporter NhaB from Salmonella paratyphi A (strain ATCC 9150 / SARB42).